We begin with the raw amino-acid sequence, 274 residues long: 3',5'-cyclic adenosine monophosphate phosphodiesterase CpdA (274 aa).

Fe cation contacts are provided by Asp21, His23, Asp63, Asn93, His163, His202, and His204. AMP contacts are provided by residues His23, Asp63, and 93-94; that span reads NH. Residue His204 participates in AMP binding.

The protein belongs to the cyclic nucleotide phosphodiesterase class-III family. Fe(2+) is required as a cofactor.

The enzyme catalyses 3',5'-cyclic AMP + H2O = AMP + H(+). Hydrolyzes cAMP to 5'-AMP. Plays an important regulatory role in modulating the intracellular concentration of cAMP, thereby influencing cAMP-dependent processes. May coordinate responses to nutritional stress, ensuring optimal competence development. This Haemophilus influenzae (strain ATCC 51907 / DSM 11121 / KW20 / Rd) protein is 3',5'-cyclic adenosine monophosphate phosphodiesterase CpdA.